We begin with the raw amino-acid sequence, 248 residues long: FCS-Like Zinc finger 14 (248 aa).

The span at 85-94 shows a compositional bias: polar residues; it reads VCRSEPNQPG. Residues 85–108 form a disordered region; it reads VCRSEPNQPGRSDPVQFMSHGGST. The FLZ-type zinc finger occupies 181 to 224; the sequence is GFLNSCYLCRKKLHGQDIFIYRGEKAFCSTECRSSHIANDERKE.

This sequence belongs to the FLZ family. In terms of assembly, interacts with KIN10 and KIN11 via its FLZ-type zinc finger domain. Interacts with KINB1, KINB2 and KINB3 via its N-terminal part.

The protein localises to the cytoplasm. The protein resides in the nucleus. May act as an adapter to facilitate the interaction of SnRK1 complex with effector proteins, conferring tissue- and stimulus-type specific differences in the SnRK1 regulation pathway. The sequence is that of FCS-Like Zinc finger 14 from Arabidopsis thaliana (Mouse-ear cress).